Consider the following 158-residue polypeptide: NADPH-dependent 7-cyano-7-deazaguanine reductase (158 aa).

Residue C56 is the Thioimide intermediate of the active site. The active-site Proton donor is the D63. Substrate is bound by residues 78–80 and 97–98; these read LES and HE.

Belongs to the GTP cyclohydrolase I family. QueF type 1 subfamily.

It localises to the cytoplasm. The enzyme catalyses 7-aminomethyl-7-carbaguanine + 2 NADP(+) = 7-cyano-7-deazaguanine + 2 NADPH + 3 H(+). It participates in tRNA modification; tRNA-queuosine biosynthesis. Its function is as follows. Catalyzes the NADPH-dependent reduction of 7-cyano-7-deazaguanine (preQ0) to 7-aminomethyl-7-deazaguanine (preQ1). This Rhodopseudomonas palustris (strain TIE-1) protein is NADPH-dependent 7-cyano-7-deazaguanine reductase.